The following is a 225-amino-acid chain: UPF0758 protein Shal_0429 (225 aa).

The 123-residue stretch at 102-224 folds into the MPN domain; it reads ILSDPDLTRD…IVSFAERGWI (123 aa). Zn(2+) contacts are provided by His173, His175, and Asp186. The JAMM motif motif lies at 173–186; that stretch reads HNHPSGIAEPSTAD.

The protein belongs to the UPF0758 family.

In Shewanella halifaxensis (strain HAW-EB4), this protein is UPF0758 protein Shal_0429.